Here is an 89-residue protein sequence, read N- to C-terminus: Small ribosomal subunit protein bS20 (89 aa).

Residues 1–25 (MANTPQSKKRARQLERRTAVNKARR) are disordered.

It belongs to the bacterial ribosomal protein bS20 family.

Binds directly to 16S ribosomal RNA. In Paracoccus denitrificans (strain Pd 1222), this protein is Small ribosomal subunit protein bS20.